The primary structure comprises 89 residues: Small ribosomal subunit protein uS15 (89 aa).

The protein belongs to the universal ribosomal protein uS15 family. In terms of assembly, part of the 30S ribosomal subunit. Forms a bridge to the 50S subunit in the 70S ribosome, contacting the 23S rRNA.

Functionally, one of the primary rRNA binding proteins, it binds directly to 16S rRNA where it helps nucleate assembly of the platform of the 30S subunit by binding and bridging several RNA helices of the 16S rRNA. In terms of biological role, forms an intersubunit bridge (bridge B4) with the 23S rRNA of the 50S subunit in the ribosome. The sequence is that of Small ribosomal subunit protein uS15 from Micrococcus luteus (strain ATCC 4698 / DSM 20030 / JCM 1464 / CCM 169 / CCUG 5858 / IAM 1056 / NBRC 3333 / NCIMB 9278 / NCTC 2665 / VKM Ac-2230) (Micrococcus lysodeikticus).